The sequence spans 145 residues: Large ribosomal subunit protein mL43 (145 aa).

It belongs to the mitochondrion-specific ribosomal protein mL43 family. In terms of assembly, component of the mitochondrial large ribosomal subunit (mt-LSU). Mature yeast 74S mitochondrial ribosomes consist of a small (37S) and a large (54S) subunit. The 37S small subunit contains a 15S ribosomal RNA (15S mt-rRNA) and at least 32 different proteins. The 54S large subunit contains a 21S rRNA (21S mt-rRNA) and at least 45 different proteins.

The protein resides in the mitochondrion. Component of the mitochondrial ribosome (mitoribosome), a dedicated translation machinery responsible for the synthesis of mitochondrial genome-encoded proteins, including at least some of the essential transmembrane subunits of the mitochondrial respiratory chain. The mitoribosomes are attached to the mitochondrial inner membrane and translation products are cotranslationally integrated into the membrane. Also has an extraribosomal function, being essential for mitochondrial genome integrity. May interact with MHR1 to take part in the mtDNA repair mechanism. The chain is Large ribosomal subunit protein mL43 (mrpl51) from Schizosaccharomyces pombe (strain 972 / ATCC 24843) (Fission yeast).